The sequence spans 209 residues: MLLCDIGNSNANFLDDNKYFTLNIDQFLEFKNEQKIFYINVNEHLKEHLKNQKNFINLEPYFLFDTIYQGLGIDRIAACYTIEDGVVVDAGSAITIDIISNSIHLGGFILPGIANYKKIYSHISPRLKSEFNTQVSLDAFPQKTMDALSYGVFKGIYLLIKDAAQNKKLYFTGGDGQFLANYFDHAIYDKLLIFRGMKKIIKENPNLLY.

Residue 5 to 12 (DIGNSNAN) coordinates ATP. Substrate-binding positions include Y68 and 72–75 (GIDR). D74 acts as the Proton acceptor in catalysis. A K(+)-binding site is contributed by D89. Residue S92 participates in ATP binding. T144 contributes to the substrate binding site.

Belongs to the type III pantothenate kinase family. Homodimer. NH4(+) is required as a cofactor. K(+) serves as cofactor.

It localises to the cytoplasm. The enzyme catalyses (R)-pantothenate + ATP = (R)-4'-phosphopantothenate + ADP + H(+). It participates in cofactor biosynthesis; coenzyme A biosynthesis; CoA from (R)-pantothenate: step 1/5. Catalyzes the phosphorylation of pantothenate (Pan), the first step in CoA biosynthesis. In Campylobacter jejuni subsp. jejuni serotype O:2 (strain ATCC 700819 / NCTC 11168), this protein is Type III pantothenate kinase.